The following is a 411-amino-acid chain: Trigger factor (411 aa).

Residues 162–240 (EDLVVIDYTT…IKEVKRRQNI (79 aa)) enclose the PPIase FKBP-type domain.

This sequence belongs to the FKBP-type PPIase family. Tig subfamily.

The protein resides in the cytoplasm. The enzyme catalyses [protein]-peptidylproline (omega=180) = [protein]-peptidylproline (omega=0). Functionally, involved in protein export. Acts as a chaperone by maintaining the newly synthesized protein in an open conformation. Functions as a peptidyl-prolyl cis-trans isomerase. The polypeptide is Trigger factor (Thermodesulfovibrio yellowstonii (strain ATCC 51303 / DSM 11347 / YP87)).